A 202-amino-acid polypeptide reads, in one-letter code: Cytochrome c oxidase assembly protein CtaG (202 aa).

The Cytoplasmic segment spans residues 1–14 (MSDKAAAPRKQGRN). The chain crosses the membrane as a helical; Signal-anchor for type II membrane protein span at residues 15–37 (NGAVVMMCLSFVFGMGAMSYAAV). Residues 38 to 202 (PLYRIFCQVT…GGTVKIEKKL (165 aa)) are Periplasmic-facing.

It belongs to the COX11/CtaG family.

It is found in the cell inner membrane. Functionally, exerts its effect at some terminal stage of cytochrome c oxidase synthesis, probably by being involved in the insertion of the copper B into subunit I. The polypeptide is Cytochrome c oxidase assembly protein CtaG (Rhizobium etli (strain ATCC 51251 / DSM 11541 / JCM 21823 / NBRC 15573 / CFN 42)).